The primary structure comprises 202 residues: Small ribosomal subunit protein uS4 (202 aa).

The region spanning 91 to 154 (SMLSSVLYNS…VNLPSVLAAI (64 aa)) is the S4 RNA-binding domain.

It belongs to the universal ribosomal protein uS4 family. Part of the 30S ribosomal subunit. Contacts protein S5. The interaction surface between S4 and S5 is involved in control of translational fidelity.

Its function is as follows. One of the primary rRNA binding proteins, it binds directly to 16S rRNA where it nucleates assembly of the body of the 30S subunit. With S5 and S12 plays an important role in translational accuracy. This Ehrlichia ruminantium (strain Gardel) protein is Small ribosomal subunit protein uS4.